Reading from the N-terminus, the 244-residue chain is MSFRGGRGGGGGFRGGRGGGGGGGFRGGRGGDRGGGFRGGRGGFGGGGRGGYDQGPPEEVVLVGVFSHQCQDDIVCNNTSGKIPYFNAPIYFKNKEQVGKIDEIFGSPGENGFSVTLSQGVKASSFEPESQLYIDPGKLLPVDRFLPQAGGGRGRGGRGRGGDRGGRGSDRGGRGGFGRGGGGGFRGGDRGGFGGGRGGFRGGDRGGFRGGRGGDFGGRGRGDFKRSYDGGSFGGQNNKRTKFE.

Disordered regions lie at residues 1–53 and 145–244; these read MSFR…GGYD and FLPQ…TKFE. RGG-box regions lie at residues 4–51 and 153–222; these read RGGR…GRGG and RGRG…RGRG. Over residues 160 to 173 the composition is skewed to basic and acidic residues; sequence RGGDRGGRGSDRGG. Composition is skewed to gly residues over residues 174–201 and 208–217; these read RGGF…GGFR and FRGGRGGDFG. Positions 218–228 are enriched in basic and acidic residues; the sequence is GRGRGDFKRSY.

This sequence belongs to the GAR1 family. Component of the small nucleolar ribonucleoprotein particle containing H/ACA-type snoRNAs (H/ACA snoRNPs).

The protein localises to the nucleus. It localises to the nucleolus. In terms of biological role, required for ribosome biogenesis. Part of a complex which catalyzes pseudouridylation of rRNA. This involves the isomerization of uridine such that the ribose is subsequently attached to C5, instead of the normal N1. Pseudouridine ('psi') residues may serve to stabilize the conformation of rRNAs. Involved in phase separation into sub-nucleolar condensates. Essential for normal development and also plays a role in fertility. The protein is Probable H/ACA ribonucleoprotein complex subunit 1-like protein of Caenorhabditis elegans.